We begin with the raw amino-acid sequence, 344 residues long: Phosphate acyltransferase (344 aa).

Belongs to the PlsX family. As to quaternary structure, homodimer. Probably interacts with PlsY.

It is found in the cytoplasm. It catalyses the reaction a fatty acyl-[ACP] + phosphate = an acyl phosphate + holo-[ACP]. It functions in the pathway lipid metabolism; phospholipid metabolism. Catalyzes the reversible formation of acyl-phosphate (acyl-PO(4)) from acyl-[acyl-carrier-protein] (acyl-ACP). This enzyme utilizes acyl-ACP as fatty acyl donor, but not acyl-CoA. The chain is Phosphate acyltransferase from Enterobacter sp. (strain 638).